The following is a 65-amino-acid chain: Large ribosomal subunit protein uL29 (65 aa).

This sequence belongs to the universal ribosomal protein uL29 family.

The protein is Large ribosomal subunit protein uL29 of Desulforamulus reducens (strain ATCC BAA-1160 / DSM 100696 / MI-1) (Desulfotomaculum reducens).